The sequence spans 224 residues: Peroxiredoxin-like 2A (224 aa).

The tract at residues 14–112 (MWSVGLGAVG…SKLGVPLYAV (99 aa)) is thioredoxin fold. Position 85 (Sec85) is a non-standard amino acid, selenocysteine. Residue Cys88 is the Redox-active of the active site.

The protein belongs to the peroxiredoxin-like PRXL2 family. PRXL2A subfamily.

The protein resides in the cytoplasm. Involved in redox regulation of the cell. Acts as an antioxidant. Inhibits TNFSF11-induced NFKB1 and JUN activation and osteoclast differentiation. May affect bone resorption and help to maintain bone mass. The protein is Peroxiredoxin-like 2A (PRXL2A) of Gallus gallus (Chicken).